A 1204-amino-acid polypeptide reads, in one-letter code: Integrator complex subunit 2 (1204 aa).

A helical membrane pass occupies residues 428–444 (FVSLSFCMLLAFSTLVS).

The protein belongs to the Integrator subunit 2 family. As to quaternary structure, component of the Integrator complex, composed of core subunits INTS1, INTS2, INTS3, INTS4, INTS5, INTS6, INTS7, INTS8, INTS9/RC74, INTS10, INTS11/CPSF3L, INTS12, INTS13, INTS14 and INTS15. The core complex associates with protein phosphatase 2A subunits PPP2CA and PPP2R1A, to form the Integrator-PP2A (INTAC) complex.

It localises to the nucleus. The protein resides in the nucleus membrane. It is found in the cytoplasm. Its function is as follows. Component of the integrator complex, a multiprotein complex that terminates RNA polymerase II (Pol II) transcription in the promoter-proximal region of genes. The integrator complex provides a quality checkpoint during transcription elongation by driving premature transcription termination of transcripts that are unfavorably configured for transcriptional elongation: the complex terminates transcription by (1) catalyzing dephosphorylation of the C-terminal domain (CTD) of Pol II subunit POLR2A/RPB1 and SUPT5H/SPT5, (2) degrading the exiting nascent RNA transcript via endonuclease activity and (3) promoting the release of Pol II from bound DNA. The integrator complex is also involved in terminating the synthesis of non-coding Pol II transcripts, such as enhancer RNAs (eRNAs), small nuclear RNAs (snRNAs), telomerase RNAs and long non-coding RNAs (lncRNAs). Mediates recruitment of cytoplasmic dynein to the nuclear envelope, probably as component of the integrator complex. This Homo sapiens (Human) protein is Integrator complex subunit 2.